Here is a 188-residue protein sequence, read N- to C-terminus: MPKASEIKKNQAVEYEGRVYFVKDIERSVPQGRAGGSLYRMRMYDVVTNQKLDETFKDSDMLNLADLVRREATFSYADGDEYVFMDTEDFTQYMLNRSAIEDELLFITEDTQGVMVILVSENPVAIDLPPTVELTIEETDPSIKGGSATARTKPARLTTGLVVQVPEHISTGDRIRVNVEERKFLSRA.

The protein belongs to the elongation factor P family.

The sequence is that of Elongation factor P-like protein from Marinobacter nauticus (strain ATCC 700491 / DSM 11845 / VT8) (Marinobacter aquaeolei).